A 714-amino-acid polypeptide reads, in one-letter code: Polyribonucleotide nucleotidyltransferase (714 aa).

Mg(2+)-binding residues include aspartate 487 and aspartate 493. One can recognise a KH domain in the interval 554–613 (PRIEVLQIPTDKIRDVIGTGGKVIREIVEKTGAKINIEDDGTVKVASANGESIRAAIKWI). The 69-residue stretch at 623–691 (GQIYDGTVVK…DRGKVRLSMK (69 aa)) folds into the S1 motif domain.

This sequence belongs to the polyribonucleotide nucleotidyltransferase family. Mg(2+) serves as cofactor.

The protein resides in the cytoplasm. It catalyses the reaction RNA(n+1) + phosphate = RNA(n) + a ribonucleoside 5'-diphosphate. Involved in mRNA degradation. Catalyzes the phosphorolysis of single-stranded polyribonucleotides processively in the 3'- to 5'-direction. In Afipia carboxidovorans (strain ATCC 49405 / DSM 1227 / KCTC 32145 / OM5) (Oligotropha carboxidovorans), this protein is Polyribonucleotide nucleotidyltransferase.